A 182-amino-acid polypeptide reads, in one-letter code: ATP synthase subunit delta (182 aa).

This sequence belongs to the ATPase delta chain family. F-type ATPases have 2 components, F(1) - the catalytic core - and F(0) - the membrane proton channel. F(1) has five subunits: alpha(3), beta(3), gamma(1), delta(1), epsilon(1). CF(0) has four main subunits: a(1), b(1), b'(1) and c(10-14). The alpha and beta chains form an alternating ring which encloses part of the gamma chain. F(1) is attached to F(0) by a central stalk formed by the gamma and epsilon chains, while a peripheral stalk is formed by the delta, b and b' chains.

The protein resides in the cellular thylakoid membrane. Its function is as follows. F(1)F(0) ATP synthase produces ATP from ADP in the presence of a proton or sodium gradient. F-type ATPases consist of two structural domains, F(1) containing the extramembraneous catalytic core and F(0) containing the membrane proton channel, linked together by a central stalk and a peripheral stalk. During catalysis, ATP synthesis in the catalytic domain of F(1) is coupled via a rotary mechanism of the central stalk subunits to proton translocation. In terms of biological role, this protein is part of the stalk that links CF(0) to CF(1). It either transmits conformational changes from CF(0) to CF(1) or is implicated in proton conduction. This Synechococcus sp. (strain CC9311) protein is ATP synthase subunit delta.